The sequence spans 487 residues: Betaine aldehyde dehydrogenase (487 aa).

K(+)-binding residues include Ile-27 and Asp-93. Position 149–151 (149–151 (GAW)) interacts with NAD(+). Lys-161 serves as the catalytic Charge relay system. NAD(+) is bound by residues 175 to 178 (KPSE) and 228 to 231 (SVPT). Leu-243 contributes to the K(+) binding site. Glu-249 serves as the catalytic Proton acceptor. Residues Gly-251, Cys-283, and Glu-384 each coordinate NAD(+). Cys-283 acts as the Nucleophile in catalysis. The residue at position 283 (Cys-283) is a Cysteine sulfenic acid (-SOH). K(+) is bound by residues Lys-454 and Gly-457. Glu-461 acts as the Charge relay system in catalysis.

This sequence belongs to the aldehyde dehydrogenase family. As to quaternary structure, dimer of dimers. Requires K(+) as cofactor.

The catalysed reaction is betaine aldehyde + NAD(+) + H2O = glycine betaine + NADH + 2 H(+). Its pathway is amine and polyamine biosynthesis; betaine biosynthesis via choline pathway; betaine from betaine aldehyde: step 1/1. Involved in the biosynthesis of the osmoprotectant glycine betaine. Catalyzes the irreversible oxidation of betaine aldehyde to the corresponding acid. In Brucella suis (strain ATCC 23445 / NCTC 10510), this protein is Betaine aldehyde dehydrogenase.